The sequence spans 159 residues: 3-hydroxyacyl-[acyl-carrier-protein] dehydratase FabZ (159 aa).

Residue H58 is part of the active site.

Belongs to the thioester dehydratase family. FabZ subfamily.

The protein resides in the cytoplasm. The enzyme catalyses a (3R)-hydroxyacyl-[ACP] = a (2E)-enoyl-[ACP] + H2O. Its function is as follows. Involved in unsaturated fatty acids biosynthesis. Catalyzes the dehydration of short chain beta-hydroxyacyl-ACPs and long chain saturated and unsaturated beta-hydroxyacyl-ACPs. The chain is 3-hydroxyacyl-[acyl-carrier-protein] dehydratase FabZ from Helicobacter pylori (strain P12).